A 293-amino-acid polypeptide reads, in one-letter code: Homoserine kinase (293 aa).

83-93 (RPKSGLGSSGA) contacts ATP.

It belongs to the GHMP kinase family. Homoserine kinase subfamily.

The protein resides in the cytoplasm. It catalyses the reaction L-homoserine + ATP = O-phospho-L-homoserine + ADP + H(+). Its pathway is amino-acid biosynthesis; L-threonine biosynthesis; L-threonine from L-aspartate: step 4/5. Catalyzes the ATP-dependent phosphorylation of L-homoserine to L-homoserine phosphate. The protein is Homoserine kinase of Pyrococcus horikoshii (strain ATCC 700860 / DSM 12428 / JCM 9974 / NBRC 100139 / OT-3).